The following is a 101-amino-acid chain: Small ribosomal subunit protein uS14 (101 aa).

The interval 1-26 (MAKVSSIQKNKSRQKKSQSLHNKRSE) is disordered. The span at 10-22 (NKSRQKKSQSLHN) shows a compositional bias: basic residues.

The protein belongs to the universal ribosomal protein uS14 family. Part of the 30S ribosomal subunit. Contacts proteins S3 and S10.

Functionally, binds 16S rRNA, required for the assembly of 30S particles and may also be responsible for determining the conformation of the 16S rRNA at the A site. This Rickettsia prowazekii (strain Madrid E) protein is Small ribosomal subunit protein uS14.